Consider the following 527-residue polypeptide: Catalase (527 aa).

A compositionally biased stretch (basic and acidic residues) spans 1–22 (MSDSRDPASDQMKQWKEQRASQ). The interval 1–34 (MSDSRDPASDQMKQWKEQRASQRPDVLTTGGGNP) is disordered. Residue serine 2 is modified to N-acetylserine. Serine 9 is subject to Phosphoserine. An N6-succinyllysine modification is found at lysine 13. At serine 21 the chain carries Phosphoserine. Catalysis depends on residues histidine 75 and asparagine 148. Residues histidine 194, serine 201, arginine 203, and asparagine 213 each coordinate NADP(+). N6-succinyllysine is present on lysine 221. The residue at position 233 (lysine 233) is an N6-acetyllysine. NADP(+)-binding residues include lysine 237, tryptophan 303, histidine 305, and lysine 306. Lysine 306 carries the post-translational modification N6-acetyllysine; alternate. Lysine 306 carries the N6-succinyllysine; alternate modification. Residue tyrosine 358 coordinates heme. 2 positions are modified to phosphoserine: serine 417 and serine 422. Position 430 is an N6-acetyllysine; alternate (lysine 430). Lysine 430 bears the N6-succinyllysine; alternate mark. Residue serine 434 is modified to Phosphoserine. Residues lysine 449 and lysine 480 each carry the N6-acetyllysine; alternate modification. 2 positions are modified to N6-succinyllysine; alternate: lysine 449 and lysine 480. Lysine 499 is subject to N6-acetyllysine. At threonine 511 the chain carries Phosphothreonine. Serine 517 carries the post-translational modification Phosphoserine. Lysine 522 is modified (N6-succinyllysine). The short motif at 524–527 (KANL) is the Microbody targeting signal; atypical element.

The protein belongs to the catalase family. In terms of assembly, homotetramer. Interacts (via microbody targeting signal) with PEX5, monomeric form interacts with PEX5, leading to its translocation into peroxisomes. Heme serves as cofactor. The cofactor is NADP(+).

It is found in the peroxisome matrix. The enzyme catalyses 2 H2O2 = O2 + 2 H2O. Catalyzes the degradation of hydrogen peroxide (H(2)O(2)) generated by peroxisomal oxidases to water and oxygen, thereby protecting cells from the toxic effects of hydrogen peroxide. Promotes growth of cells including T-cells, B-cells, myeloid leukemia cells, melanoma cells, mastocytoma cells and normal and transformed fibroblast cells. The chain is Catalase (Cat) from Mus musculus (Mouse).